The chain runs to 242 residues: Floral homeotic protein AGAMOUS (242 aa).

The MADS-box domain occupies 19-73 (RGKIEIKRIENTTNRQVTFCKRRNGLLKKAYELSVLCDAEVALIVFSSRGRLYEY). Residues 103 to 193 (AQYYQQEASK…RAKIAETERS (91 aa)) form the K-box domain.

In terms of tissue distribution, expressed exclusively in stamens and carpels.

The protein localises to the nucleus. In terms of biological role, probable transcription factor involved in regulating genes that determines stamen and carpel development in wild-type flowers. This Petunia hybrida (Petunia) protein is Floral homeotic protein AGAMOUS (AG1).